We begin with the raw amino-acid sequence, 344 residues long: UPF0283 membrane protein YcjF (344 aa).

The next 3 helical transmembrane spans lie at 70 to 90 (MVMG…VQWT), 100 to 120 (VALG…GSVV), and 213 to 233 (ESTL…FIAW).

It belongs to the UPF0283 family.

Its subcellular location is the cell inner membrane. The protein is UPF0283 membrane protein YcjF of Shigella dysenteriae serotype 1 (strain Sd197).